The chain runs to 257 residues: Nopaline permease ATP-binding protein P (257 aa).

Positions 8–253 constitute an ABC transporter domain; it reads LVAEDVHKNF…PTSPRCRAFL (246 aa). 40–47 contacts ATP; it reads GSSGSGKS.

It belongs to the ABC transporter superfamily.

The protein resides in the cell inner membrane. Its function is as follows. Component of the nopaline active transport system probably consisting of four subunits: Q, M, P and T. This system is also capable of transporting octopine provided that catabolic functions are induced with nopaline. The sequence is that of Nopaline permease ATP-binding protein P (nocP) from Agrobacterium fabrum (strain C58 / ATCC 33970) (Agrobacterium tumefaciens (strain C58)).